The sequence spans 631 residues: Integrator complex subunit 10 (631 aa).

Positions 545-570 (FELTSSPNSSGTPTATTVAGGSQSRR) are enriched in polar residues. The disordered stretch occupies residues 545 to 577 (FELTSSPNSSGTPTATTVAGGSQSRRIGTRGAD).

It belongs to the Integrator subunit 10 family. As to quaternary structure, belongs to the multiprotein complex Integrator, at least composed of IntS1, IntS2, IntS3, IntS4, omd/IntS5, IntS6, defl/IntS7, IntS8, IntS9, IntS10, IntS11, IntS12, asun/IntS13, IntS14 and IntS15. The core complex associates with protein phosphatase 2A subunits mts/PP2A and Pp2A-29B, to form the Integrator-PP2A (INTAC) complex.

Its subcellular location is the nucleus. Its function is as follows. Component of the integrator complex, a multiprotein complex that terminates RNA polymerase II (Pol II) transcription in the promoter-proximal region of genes. The integrator complex provides a quality checkpoint during transcription elongation by driving premature transcription termination of transcripts that are unfavorably configured for transcriptional elongation: the complex terminates transcription by (1) catalyzing dephosphorylation of the C-terminal domain (CTD) of Pol II subunit Polr2A/Rbp1 and Spt5, and (2) degrading the exiting nascent RNA transcript via endonuclease activity. The integrator complex is also involved in the 3'-end processing of the U7 snRNA, and also the spliceosomal snRNAs U1, U2, U4 and U5. This Drosophila melanogaster (Fruit fly) protein is Integrator complex subunit 10.